The sequence spans 158 residues: Glutathione peroxidase homolog BsaA (158 aa).

Cys-36 is a catalytic residue.

Belongs to the glutathione peroxidase family.

This is Glutathione peroxidase homolog BsaA (bsaA) from Staphylococcus aureus (strain COL).